The chain runs to 718 residues: DNA ligase (718 aa).

NAD(+)-binding positions include 44–48 (DADYD), 93–94 (SL), and Glu127. Residue Lys129 is the N6-AMP-lysine intermediate of the active site. Residues Arg150, Glu186, Lys302, and Lys326 each contribute to the NAD(+) site. The Zn(2+) site is built by Cys432, Cys435, Cys456, and Cys462. The BRCT domain occupies 640–718 (TAGSPVAGKT…EDQWLALISG (79 aa)).

It belongs to the NAD-dependent DNA ligase family. LigA subfamily. Requires Mg(2+) as cofactor. Mn(2+) is required as a cofactor.

The enzyme catalyses NAD(+) + (deoxyribonucleotide)n-3'-hydroxyl + 5'-phospho-(deoxyribonucleotide)m = (deoxyribonucleotide)n+m + AMP + beta-nicotinamide D-nucleotide.. In terms of biological role, DNA ligase that catalyzes the formation of phosphodiester linkages between 5'-phosphoryl and 3'-hydroxyl groups in double-stranded DNA using NAD as a coenzyme and as the energy source for the reaction. It is essential for DNA replication and repair of damaged DNA. The polypeptide is DNA ligase (Rhizobium johnstonii (strain DSM 114642 / LMG 32736 / 3841) (Rhizobium leguminosarum bv. viciae)).